We begin with the raw amino-acid sequence, 150 residues long: UPF0756 membrane protein STH2648 (150 aa).

The next 4 membrane-spanning stretches (helical) occupy residues 13–33 (ALGV…VLIL), 52–72 (AGLI…EVGW), 85–105 (LAAI…VTLL), and 111–131 (VIVG…GIPV).

Belongs to the UPF0756 family.

It is found in the cell membrane. This Symbiobacterium thermophilum (strain DSM 24528 / JCM 14929 / IAM 14863 / T) protein is UPF0756 membrane protein STH2648.